A 159-amino-acid polypeptide reads, in one-letter code: NADH-quinone oxidoreductase subunit I (159 aa).

4Fe-4S ferredoxin-type domains follow at residues 51–80 (RRYE…IEAD) and 90–119 (TRYD…EGPN). [4Fe-4S] cluster contacts are provided by cysteine 60, cysteine 63, cysteine 66, cysteine 70, cysteine 99, cysteine 102, cysteine 105, and cysteine 109.

It belongs to the complex I 23 kDa subunit family. As to quaternary structure, NDH-1 is composed of 14 different subunits. Subunits NuoA, H, J, K, L, M, N constitute the membrane sector of the complex. Requires [4Fe-4S] cluster as cofactor.

The protein resides in the cell inner membrane. The catalysed reaction is a quinone + NADH + 5 H(+)(in) = a quinol + NAD(+) + 4 H(+)(out). In terms of biological role, NDH-1 shuttles electrons from NADH, via FMN and iron-sulfur (Fe-S) centers, to quinones in the respiratory chain. The immediate electron acceptor for the enzyme in this species is believed to be ubiquinone. Couples the redox reaction to proton translocation (for every two electrons transferred, four hydrogen ions are translocated across the cytoplasmic membrane), and thus conserves the redox energy in a proton gradient. This is NADH-quinone oxidoreductase subunit I from Rickettsia peacockii (strain Rustic).